Reading from the N-terminus, the 358-residue chain is 3-dehydroquinate synthase (358 aa).

Residues Asp-70–Lys-75, Gly-104–Asp-108, Thr-128–Thr-129, Lys-141, Lys-150, and Cys-168–Thr-171 contribute to the NAD(+) site. Glu-183, His-246, and His-263 together coordinate Zn(2+).

The protein belongs to the sugar phosphate cyclases superfamily. Dehydroquinate synthase family. It depends on Co(2+) as a cofactor. The cofactor is Zn(2+). NAD(+) serves as cofactor.

Its subcellular location is the cytoplasm. The enzyme catalyses 7-phospho-2-dehydro-3-deoxy-D-arabino-heptonate = 3-dehydroquinate + phosphate. The protein operates within metabolic intermediate biosynthesis; chorismate biosynthesis; chorismate from D-erythrose 4-phosphate and phosphoenolpyruvate: step 2/7. Functionally, catalyzes the conversion of 3-deoxy-D-arabino-heptulosonate 7-phosphate (DAHP) to dehydroquinate (DHQ). This chain is 3-dehydroquinate synthase, found in Shewanella woodyi (strain ATCC 51908 / MS32).